A 515-amino-acid polypeptide reads, in one-letter code: Cytidine and dCMP deaminase domain-containing protein 1 (515 aa).

Polar residues-rich tracts occupy residues 1-11 (MKEAGQMQNLE) and 18-27 (SVSTQTGSMT). Disordered stretches follow at residues 1–27 (MKEA…GSMT) and 56–83 (RQKS…STDK). Residues 60 to 83 (QKNEEGKHGPLGDNEEMTRVSTDK) are compositionally biased toward basic and acidic residues. Positions 71–169 (GDNEEMTRVS…SLLTEASSSE (99 aa)) constitute a CMP/dCMP-type deaminase 1 domain. 3 residues coordinate Zn(2+): H110, C135, and C138. The short motif at 272–284 (NLRQNMKDLILLL) is the Nuclear export signal element. Positions 318-483 (EIARHCMVQA…LNPSGAYGLE (166 aa)) constitute a CMP/dCMP-type deaminase 2 domain. A Zn(2+)-binding site is contributed by H399. E401 acts as the Proton donor in catalysis. C427 and C430 together coordinate Zn(2+). The Bipartite nuclear localization signal signature appears at 489 to 511 (RRENGVLRPVPQKEEQHQDKKLC). The disordered stretch occupies residues 494-515 (VLRPVPQKEEQHQDKKLCLGIH).

The protein belongs to the cytidine and deoxycytidylate deaminase family. Zn(2+) serves as cofactor.

The protein localises to the cytoplasm. It localises to the nucleus. It carries out the reaction 2'-deoxycytidine + H2O + H(+) = 2'-deoxyuridine + NH4(+). The catalysed reaction is cytidine + H2O + H(+) = uridine + NH4(+). Its function is as follows. Catalyzes the deamination of cytidine and deoxycytidine into uridine and deoxyuridine, respectively. May play an important role in testicular development and spermatogenesis. This Pongo abelii (Sumatran orangutan) protein is Cytidine and dCMP deaminase domain-containing protein 1 (CDADC1).